Reading from the N-terminus, the 507-residue chain is Arabinose import ATP-binding protein AraG (507 aa).

2 ABC transporter domains span residues 8 to 243 (LSFH…MVGR) and 255 to 499 (PHGE…MLRI). 40 to 47 (GENGAGKS) serves as a coordination point for ATP.

This sequence belongs to the ABC transporter superfamily. Arabinose importer (TC 3.A.1.2.2) family. As to quaternary structure, the complex is composed of two ATP-binding proteins (AraG), two transmembrane proteins (AraH) and a solute-binding protein (AraF).

It localises to the cell inner membrane. It catalyses the reaction L-arabinose(out) + ATP + H2O = L-arabinose(in) + ADP + phosphate + H(+). Functionally, part of the ABC transporter complex AraFGH involved in arabinose import. Responsible for energy coupling to the transport system. In Pectobacterium atrosepticum (strain SCRI 1043 / ATCC BAA-672) (Erwinia carotovora subsp. atroseptica), this protein is Arabinose import ATP-binding protein AraG.